Reading from the N-terminus, the 104-residue chain is MAAIQGIEGVISQLQATAMAARGQDTHSQSTVSFAGQLHAALDRISDRQTAARVQAEKFTLGEPGIALNDVMADMQKASVSMQMGIQVRNKLVAAYQEVMSMQV.

This sequence belongs to the FliE family.

The protein localises to the bacterial flagellum basal body. The polypeptide is Flagellar hook-basal body complex protein FliE (Salmonella agona (strain SL483)).